Here is a 363-residue protein sequence, read N- to C-terminus: Chorismate synthase (363 aa).

R48 and R54 together coordinate NADP(+). Residues 125-127 (RSS), 238-239 (NA), G278, 293-297 (KPTSS), and R319 contribute to the FMN site.

The protein belongs to the chorismate synthase family. As to quaternary structure, homotetramer. The cofactor is FMNH2.

The catalysed reaction is 5-O-(1-carboxyvinyl)-3-phosphoshikimate = chorismate + phosphate. The protein operates within metabolic intermediate biosynthesis; chorismate biosynthesis; chorismate from D-erythrose 4-phosphate and phosphoenolpyruvate: step 7/7. In terms of biological role, catalyzes the anti-1,4-elimination of the C-3 phosphate and the C-6 proR hydrogen from 5-enolpyruvylshikimate-3-phosphate (EPSP) to yield chorismate, which is the branch point compound that serves as the starting substrate for the three terminal pathways of aromatic amino acid biosynthesis. This reaction introduces a second double bond into the aromatic ring system. This chain is Chorismate synthase, found in Acidithiobacillus ferrooxidans (strain ATCC 23270 / DSM 14882 / CIP 104768 / NCIMB 8455) (Ferrobacillus ferrooxidans (strain ATCC 23270)).